Here is a 737-residue protein sequence, read N- to C-terminus: Catalase-peroxidase 2 (737 aa).

The segment at 1 to 33 (MPEATEHPPIGEAQTEPAQSGCPMVIKPPVEGG) is disordered. A cross-link (tryptophyl-tyrosyl-methioninium (Trp-Tyr) (with M-261)) is located at residues 107–235 (WHAAGTYRVQ…LGASHMGLIY (129 aa)). H108 serves as the catalytic Proton acceptor. Positions 235–261 (YVNPEGPEGNPDPIAAAIDIRETFGRM) form a cross-link, tryptophyl-tyrosyl-methioninium (Tyr-Met) (with W-107). H276 is a binding site for heme.

Belongs to the peroxidase family. Peroxidase/catalase subfamily. In terms of assembly, homodimer or homotetramer. The cofactor is heme b. Formation of the three residue Trp-Tyr-Met cross-link is important for the catalase, but not the peroxidase activity of the enzyme.

It carries out the reaction H2O2 + AH2 = A + 2 H2O. The enzyme catalyses 2 H2O2 = O2 + 2 H2O. Functionally, bifunctional enzyme with both catalase and broad-spectrum peroxidase activity. The polypeptide is Catalase-peroxidase 2 (Mycolicibacterium vanbaalenii (strain DSM 7251 / JCM 13017 / BCRC 16820 / KCTC 9966 / NRRL B-24157 / PYR-1) (Mycobacterium vanbaalenii)).